The chain runs to 140 residues: Large ribosomal subunit protein uL16 (140 aa).

The protein belongs to the universal ribosomal protein uL16 family. In terms of assembly, part of the 50S ribosomal subunit.

Binds 23S rRNA and is also seen to make contacts with the A and possibly P site tRNAs. This Phytoplasma australiense protein is Large ribosomal subunit protein uL16.